The primary structure comprises 24 residues: Carboxypeptidase 1 (24 aa).

2 N-linked (GlcNAc...) asparagine glycosylation sites follow: N3 and N11.

It belongs to the peptidase S10 family. Monomer. Contains both N- and O-linked sugar chains. The N-linked oligosaccharides are unique structures of Man(10)GlcNAc(2) and Man(11)GlcNAc(2). Deglycosylation does neither affect catalytic activity, pH, thermal stability, or resistance to proteolysis of the enzyme.

Its subcellular location is the secreted. With respect to regulation, inhibited by DFP. In terms of biological role, removes acidic, neutral and basic amino acids as well as proline from the C-terminal position. Digests preferentially peptides containing a hydrophobic residue in P1' position, as well as arginine, lysine or phenylalanine in P1 position of ester substrate. Catalyzes also peptide synthesis. The polypeptide is Carboxypeptidase 1 (Aspergillus niger).